Here is a 216-residue protein sequence, read N- to C-terminus: 3-isopropylmalate dehydratase small subunit 1 (216 aa).

It belongs to the LeuD family. LeuD type 1 subfamily. As to quaternary structure, heterodimer of LeuC and LeuD.

The enzyme catalyses (2R,3S)-3-isopropylmalate = (2S)-2-isopropylmalate. Its pathway is amino-acid biosynthesis; L-leucine biosynthesis; L-leucine from 3-methyl-2-oxobutanoate: step 2/4. Its function is as follows. Catalyzes the isomerization between 2-isopropylmalate and 3-isopropylmalate, via the formation of 2-isopropylmaleate. This chain is 3-isopropylmalate dehydratase small subunit 1, found in Bordetella bronchiseptica (strain ATCC BAA-588 / NCTC 13252 / RB50) (Alcaligenes bronchisepticus).